The chain runs to 85 residues: UPF0386 protein Bind_1628 (85 aa).

Belongs to the UPF0386 family.

This is UPF0386 protein Bind_1628 from Beijerinckia indica subsp. indica (strain ATCC 9039 / DSM 1715 / NCIMB 8712).